A 183-amino-acid polypeptide reads, in one-letter code: Dual-action ribosomal maturation protein DarP (183 aa).

This sequence belongs to the DarP family.

It localises to the cytoplasm. Its function is as follows. Member of a network of 50S ribosomal subunit biogenesis factors which assembles along the 30S-50S interface, preventing incorrect 23S rRNA structures from forming. Promotes peptidyl transferase center (PTC) maturation. The sequence is that of Dual-action ribosomal maturation protein DarP from Shigella flexneri serotype 5b (strain 8401).